The sequence spans 713 residues: Leucine-rich repeat-containing protein 4B (713 aa).

Positions 1 to 35 (MARARGSPCPPLPPGRMSWPHGALLFLWLFSPPLG) are cleaved as a signal peptide. The Extracellular segment spans residues 36–576 (AGGGGVAVTS…DLDDVMKTTK (541 aa)). Residues 48-86 (GGGSPPATSCPVACSCSNQASRVICTRRDLAEVPASIPV) form the LRRNT domain. LRR repeat units follow at residues 87-108 (NTRY…TFKH), 111-132 (HLEI…AFNG), 135-156 (SLNT…AFEY), 159-180 (KLRE…AFNR), 183-205 (SLRR…AFEG), 208-229 (NLRY…TALV), 230-251 (RLEE…SFQG), 254-275 (SLRK…AFDD), and 278-299 (SLEE…LFTP). Asparagine 224 carries an N-linked (GlcNAc...) asparagine glycan. N-linked (GlcNAc...) asparagine glycosylation is found at asparagine 283, asparagine 333, asparagine 374, asparagine 400, asparagine 422, asparagine 425, asparagine 444, and asparagine 452. Residues 311–363 (NPWHCNCDVLWLSWWLKETVPSNTTCCARCHAPAGLKGRYIGELDQSHFTCYA) form the LRRCT domain. In terms of domain architecture, Ig-like C2-type spans 364–452 (PVIVEPPTDL…GNTTASATLN (89 aa)). Residues cysteine 385 and cysteine 436 are joined by a disulfide bond. The segment at 497–551 (TQPGEEALQPRGTEKEPPGPTTDGVWGGGRPGDAAGPASSSTTAPAPRSSRPTEK) is disordered. A compositionally biased stretch (low complexity) spans 528 to 546 (GDAAGPASSSTTAPAPRSS). The helical transmembrane segment at 577 to 597 (IIIGCFVAITFMAAVMLVAFY) threads the bilayer. The Cytoplasmic segment spans residues 598-713 (KLRKQHQLHK…SKENVQETQI (116 aa)). Serine 693 carries the phosphoserine modification. The interval 694 to 713 (IHEPLLFKSGSKENVQETQI) is disordered. A compositionally biased stretch (basic and acidic residues) spans 703-713 (GSKENVQETQI).

In terms of assembly, interacts with PTPRF. Interacts with DLG4. Post-translationally, N-glycosylated. O-glycosylated; contains sialic acid.

It is found in the membrane. Its subcellular location is the presynaptic cell membrane. Synaptic adhesion protein. Regulates the formation of excitatory synapses. The trans-synaptic adhesion between LRRC4B and PTPRF regulates the formation of excitatory synapses in a bidirectional manner. This is Leucine-rich repeat-containing protein 4B (LRRC4B) from Homo sapiens (Human).